Reading from the N-terminus, the 331-residue chain is dTDP-glucose 4,6-dehydratase (331 aa).

Residues 11-12 (FI), 33-36 (DALT), 57-58 (DI), 77-81 (FAAES), and threonine 96 contribute to the NAD(+) site. Residue serine 81 coordinates substrate. Threonine 120 is a binding site for substrate. Catalysis depends on aspartate 121, which acts as the Proton donor. Catalysis depends on proton acceptor residues glutamate 122 and tyrosine 147. 147-151 (YSATK) contributes to the NAD(+) binding site. Residue asparagine 176 coordinates substrate. Residue asparagine 177 coordinates NAD(+). Residues 186 to 191 (KFIPRQ), 202 to 204 (KLY), arginine 211, asparagine 246, and 269 to 273 (DRVGH) contribute to the substrate site.

This sequence belongs to the NAD(P)-dependent epimerase/dehydratase family. dTDP-glucose dehydratase subfamily. In terms of assembly, homodimer. The cofactor is NAD(+).

The catalysed reaction is dTDP-alpha-D-glucose = dTDP-4-dehydro-6-deoxy-alpha-D-glucose + H2O. The protein operates within carbohydrate biosynthesis; dTDP-L-rhamnose biosynthesis. Its function is as follows. Catalyzes the dehydration of dTDP-D-glucose to form dTDP-6-deoxy-D-xylo-4-hexulose via a three-step process involving oxidation, dehydration and reduction. Involved in the biosynthesis of the dTDP-L-rhamnose which is a component of the critical linker, D-N-acetylglucosamine-L-rhamnose disaccharide, which connects the galactan region of arabinogalactan to peptidoglycan via a phosphodiester linkage. In Mycobacterium tuberculosis (strain CDC 1551 / Oshkosh), this protein is dTDP-glucose 4,6-dehydratase (rmlB).